Reading from the N-terminus, the 374-residue chain is Peptide chain release factor 2 (374 aa).

At Gln-256 the chain carries N5-methylglutamine.

The protein belongs to the prokaryotic/mitochondrial release factor family. Post-translationally, methylated by PrmC. Methylation increases the termination efficiency of RF2.

The protein localises to the cytoplasm. Peptide chain release factor 2 directs the termination of translation in response to the peptide chain termination codons UGA and UAA. This Mycobacterium leprae (strain Br4923) protein is Peptide chain release factor 2.